We begin with the raw amino-acid sequence, 300 residues long: Ornithine carbamoyltransferase (300 aa).

Carbamoyl phosphate is bound by residues 49–52, glutamine 76, arginine 100, and 127–130; these read STRT and HPCQ. Residues asparagine 158, aspartate 218, and 222–223 each bind L-ornithine; that span reads SM. Residues 258 to 259 and arginine 286 contribute to the carbamoyl phosphate site; that span reads CL.

This sequence belongs to the aspartate/ornithine carbamoyltransferase superfamily. OTCase family.

It localises to the cytoplasm. It catalyses the reaction carbamoyl phosphate + L-ornithine = L-citrulline + phosphate + H(+). It functions in the pathway amino-acid biosynthesis; L-arginine biosynthesis; L-arginine from L-ornithine and carbamoyl phosphate: step 1/3. In terms of biological role, reversibly catalyzes the transfer of the carbamoyl group from carbamoyl phosphate (CP) to the N(epsilon) atom of ornithine (ORN) to produce L-citrulline. The chain is Ornithine carbamoyltransferase from Nitratidesulfovibrio vulgaris (strain ATCC 29579 / DSM 644 / CCUG 34227 / NCIMB 8303 / VKM B-1760 / Hildenborough) (Desulfovibrio vulgaris).